Consider the following 418-residue polypeptide: Endoglucanase EG-II (418 aa).

The signal sequence occupies residues 1-21 (MNKSVAPLLLAASILYGGAVA). Gln-22 is subject to Pyrrolidone carboxylic acid. Residues 22-57 (QQTVWGQCGGIGWSGPTNCAPGSACSTLNPYYAQCI) form the CBM1 domain. Residues 58–91 (PGATTITTSTRPPSGPTTTTRATSTSSSTPPTSS) form a linker region. The segment at 63 to 91 (ITTSTRPPSGPTTTTRATSTSSSTPPTSS) is disordered. Residues 92-418 (GVRFAGVNIA…SLVSSCLARK (327 aa)) are catalytic. An intrachain disulfide couples Cys-107 to Cys-113. Asn-124 is a glycosylation site (N-linked (GlcNAc) asparagine). Residues Cys-183 and Cys-190 are joined by a disulfide bond. Glu-239 serves as the catalytic Proton donor/acceptor. 2 disulfide bridges follow: Cys-323–Cys-359 and Cys-364–Cys-414. Catalysis depends on Glu-350, which acts as the Nucleophile.

The protein belongs to the glycosyl hydrolase 5 (cellulase A) family.

The protein localises to the secreted. It catalyses the reaction Endohydrolysis of (1-&gt;4)-beta-D-glucosidic linkages in cellulose, lichenin and cereal beta-D-glucans.. Its function is as follows. Endoglucanase (EG) that cleaves the internal beta-1,4-glucosidic bonds in cellulose. The degradation of cellulose involves an interplay between different cellulolytic enzymes. Hydrolysis starts with EGs, which cut internal glycosidic linkages to reduce the polymerization degree of the substrate and creates new chain ends for exocellobiohydrolases (CBHs). The CBH release the disaccharide cellobiose from the non-reducing end of the cellulose polymer chain. Finally, beta-1,4-glucosidases hydrolyze the cellobiose and other short cello-oligosaccharides into glucose units. The sequence is that of Endoglucanase EG-II (egl2) from Hypocrea jecorina (Trichoderma reesei).